A 198-amino-acid polypeptide reads, in one-letter code: Phomoidride biosynthesis cluster protein N (198 aa).

The signal sequence occupies residues Met1 to Ser18. Asn93 is a glycosylation site (N-linked (GlcNAc...) asparagine).

This sequence belongs to the tstN family.

Its function is as follows. Phosphatidylethanolamine-binding protein; part of the gene cluster that mediates the biosynthesis of the antihypercholesterolemic agents phomoidrides which are dimeric anhydrides. Within the pathway, tstNB is not essential for dimerization and its function has still to be determined. The pathway begins with the highly reducing polyketide synthase tstA that catalyzes the formation of a C12-fatty acyl-ACP, starting from one acetate and 5 malonate units. The hydrolase tstM is involved in the release of the C12-fatty acyl chain from phiA. The alkylcitrate synthase (ACS) tstJ and the alkylcitrate dehydratase (ACDH) tstI then give rise to decarboxylated monomeric anhydrides by coupling the C12-fatty acyl chain with oxalacetic acid. The cyclase tstC is responsible for the dimerization of the monomeric anhydrides which leads to the production of prephomoidride that contains the characteristic bicyclo[4.3.1]deca-1,6-diene system of phomoidrides. Iterative oxidation catalyzed by the alpha-ketoglutarate-dependent dioxygenase tstK produced then phomoidride A. Finally, the methyltransferase tstE converts phomoidride A to phomoidride B via an acetalization reaction. The phosphatidylethanolamine-binding protein tstB and tstN are not essential for dimerization and their functions have still to be determined. This chain is Phomoidride biosynthesis cluster protein N, found in Talaromyces stipitatus (strain ATCC 10500 / CBS 375.48 / QM 6759 / NRRL 1006) (Penicillium stipitatum).